The sequence spans 707 residues: Protein kinase C theta type (707 aa).

The C2 domain maps to 1–107 (MSPFLRIGLS…KNNGRTEIWL (107 aa)). Tyr-90 carries the post-translational modification Phosphotyrosine; by LCK. The segment at 159 to 209 (CHEFTATFFPQPTFCSVCHEFVWGLNKQGYQCRQCNAAIHKKCIDKVIAKC) adopts a Phorbol-ester/DAG-type 1 zinc-finger fold. Thr-219 is modified (phosphothreonine; by autocatalysis). Residues 231–281 (PHRFKVYNYKSPTFCEHCGTLLWGLARQGLKCDACGMNVHHRCQTKVANLC) form a Phorbol-ester/DAG-type 2 zinc finger. The segment at 327–365 (ETRPPCVPTPGKREPQGISWDSPLDGSNKSAGPPEPEVS) is disordered. The residue at position 348 (Ser-348) is a Phosphoserine. The Protein kinase domain maps to 380–634 (FILHKMLGKG…RGDIRQHPLF (255 aa)). ATP-binding positions include 386–394 (LGKGSFGKV) and Lys-409. The active-site Proton acceptor is Asp-504. Thr-538 is subject to Phosphothreonine; by PDPK1. Residues 635–706 (REINWEELER…INPGMETLIC (72 aa)) form the AGC-kinase C-terminal domain. The residue at position 676 (Ser-676) is a Phosphoserine; by autocatalysis. Ser-685 is modified (phosphoserine). The residue at position 695 (Ser-695) is a Phosphoserine; by autocatalysis.

The protein belongs to the protein kinase superfamily. AGC Ser/Thr protein kinase family. PKC subfamily. In terms of assembly, part of a membrane raft complex composed at least of BCL10, CARD11, MALT1 and IKBKB. Interacts with GLRX3 (via N-terminus). Interacts with ECT2. Interacts with CCDC88A/GIV; the interaction leads to phosphorylation of CCDC88A and inhibition of its guanine nucleotide exchange factor activity. Interacts with CD28. The cofactor is Mg(2+). Post-translationally, autophosphorylation at Thr-219 is required for targeting to the TCR and cellular function of PRKCQ upon antigen receptor ligation. Following TCR stimulation, phosphorylated at Tyr-90 and Ser-685. As to expression, T-lymphocytes and skeletal muscle.

The protein resides in the cytoplasm. It localises to the cell membrane. The enzyme catalyses L-seryl-[protein] + ATP = O-phospho-L-seryl-[protein] + ADP + H(+). The catalysed reaction is L-threonyl-[protein] + ATP = O-phospho-L-threonyl-[protein] + ADP + H(+). With respect to regulation, novel PKCs (PRKCD, PRKCE, PRKCH and PRKCQ) are calcium-insensitive, but activated by diacylglycerol (DAG) and phosphatidylserine. Three specific sites; Thr-538 (activation loop of the kinase domain), Ser-676 (turn motif) and Ser-695 (hydrophobic region), need to be phosphorylated for its full activation. Calcium-independent, phospholipid- and diacylglycerol (DAG)-dependent serine/threonine-protein kinase that mediates non-redundant functions in T-cell receptor (TCR) signaling, including T-cells activation, proliferation, differentiation and survival, by mediating activation of multiple transcription factors such as NF-kappa-B, JUN, NFATC1 and NFATC2. In TCR-CD3/CD28-co-stimulated T-cells, is required for the activation of NF-kappa-B and JUN, which in turn are essential for IL2 production, and participates in the calcium-dependent NFATC1 and NFATC2 transactivation. Mediates the activation of the canonical NF-kappa-B pathway (NFKB1) by direct phosphorylation of CARD11 on several serine residues, inducing CARD11 association with lipid rafts and recruitment of the BCL10-MALT1 complex, which then activates IKK complex, resulting in nuclear translocation and activation of NFKB1. May also play an indirect role in activation of the non-canonical NF-kappa-B (NFKB2) pathway. In the signaling pathway leading to JUN activation, acts by phosphorylating the mediator STK39/SPAK and may not act through MAP kinases signaling. Plays a critical role in TCR/CD28-induced NFATC1 and NFATC2 transactivation by participating in the regulation of reduced inositol 1,4,5-trisphosphate generation and intracellular calcium mobilization. After costimulation of T-cells through CD28 can phosphorylate CBLB and is required for the ubiquitination and subsequent degradation of CBLB, which is a prerequisite for the activation of TCR. During T-cells differentiation, plays an important role in the development of T-helper 2 (Th2) cells following immune and inflammatory responses, and, in the development of inflammatory autoimmune diseases, is necessary for the activation of IL17-producing Th17 cells. May play a minor role in Th1 response. Upon TCR stimulation, mediates T-cell protective survival signal by phosphorylating BAD, thus protecting T-cells from BAD-induced apoptosis, and by up-regulating BCL-X(L)/BCL2L1 levels through NF-kappa-B and JUN pathways. In platelets, regulates signal transduction downstream of the ITGA2B, CD36/GP4, F2R/PAR1 and F2RL3/PAR4 receptors, playing a positive role in 'outside-in' signaling and granule secretion signal transduction. May relay signals from the activated ITGA2B receptor by regulating the uncoupling of WASP and WIPF1, thereby permitting the regulation of actin filament nucleation and branching activity of the Arp2/3 complex. May mediate inhibitory effects of free fatty acids on insulin signaling by phosphorylating IRS1, which in turn blocks IRS1 tyrosine phosphorylation and downstream activation of the PI3K/AKT pathway. Phosphorylates MSN (moesin) in the presence of phosphatidylglycerol or phosphatidylinositol. Phosphorylates PDPK1 at 'Ser-504' and 'Ser-532' and negatively regulates its ability to phosphorylate PKB/AKT1. Phosphorylates CCDC88A/GIV and inhibits its guanine nucleotide exchange factor activity. Phosphorylates and activates LRRK1, which phosphorylates RAB proteins involved in intracellular trafficking. In Mus musculus (Mouse), this protein is Protein kinase C theta type (Prkcq).